Reading from the N-terminus, the 86-residue chain is YcgL domain-containing protein IL1825 (86 aa).

Residues 1–85 (MLCDVYRSSK…KREELQVNVN (85 aa)) enclose the YcgL domain.

The chain is YcgL domain-containing protein IL1825 from Idiomarina loihiensis (strain ATCC BAA-735 / DSM 15497 / L2-TR).